Reading from the N-terminus, the 73-residue chain is Homeodomain-only protein (73 aa).

Residues 3–62 constitute a DNA-binding region (homeobox; degenerate); that stretch reads AETASGPTEDQVEILEYNFNKVDKHPDSTTLCLIAAEAGLSEEETQKWFKQRLAKWRRSE.

Interacts with serum response factor (SRF). Component of a large complex containing histone deacetylases such as HDAC2. Interacts with the acetylated forms of HSPA1A and HSPA1B. Interacts with HSPA8. Widely expressed. Expressed in the heart, brain, placenta, lung, skeletal and smooth muscles, uterus, urinary bladder, kidney and spleen. Down-regulated in some types of cancer such as lung cancer, choriocarcinoma, head and neck squamous cell carcinoma and oral squamous cell carcinoma.

It localises to the nucleus. The protein resides in the cytoplasm. In terms of biological role, atypical homeodomain protein which does not bind DNA and is required to modulate cardiac growth and development. Acts via its interaction with SRF, thereby modulating the expression of SRF-dependent cardiac-specific genes and cardiac development. Prevents SRF-dependent transcription either by inhibiting SRF binding to DNA or by recruiting histone deacetylase (HDAC) proteins that prevent transcription by SRF. Overexpression causes cardiac hypertrophy. May act as a tumor suppressor. Acts as a co-chaperone for HSPA1A and HSPA1B chaperone proteins and assists in chaperone-mediated protein refolding. This is Homeodomain-only protein (HOPX) from Homo sapiens (Human).